A 219-amino-acid polypeptide reads, in one-letter code: UPF0173 metal-dependent hydrolase Mhun_1705 (219 aa).

Belongs to the UPF0173 family.

This Methanospirillum hungatei JF-1 (strain ATCC 27890 / DSM 864 / NBRC 100397 / JF-1) protein is UPF0173 metal-dependent hydrolase Mhun_1705.